A 165-amino-acid polypeptide reads, in one-letter code: uncharacterized protein (165 aa).

A signal peptide spans methionine 1–alanine 25.

This is an uncharacterized protein from Bacillus subtilis (strain 168).